The following is a 138-amino-acid chain: Protein FAM136A (138 aa).

Ala-2 is modified (N-acetylalanine). 2 positions are modified to phosphothreonine: Thr-124 and Thr-126.

It belongs to the FAM136 family.

The polypeptide is Protein FAM136A (FAM136A) (Bos taurus (Bovine)).